We begin with the raw amino-acid sequence, 258 residues long: Alpha-hydroxynitrile lyase (258 aa).

Catalysis depends on proton donor/acceptor residues Ser81 and His236.

It belongs to the AB hydrolase superfamily. Hydroxynitrile lyase family. In terms of assembly, homodimer.

It catalyses the reaction (R)-mandelonitrile = benzaldehyde + hydrogen cyanide. In terms of biological role, involved in cyanogenesis, the release of HCN from injured tissues. Displays R-selective hydroxynitrile lyase activity. Also accepts nitromethane (MeNO2) as a donor in a reaction with aromatic aldehydes to yield (R)-beta-nitro alcohols. This is Alpha-hydroxynitrile lyase from Arabidopsis thaliana (Mouse-ear cress).